Reading from the N-terminus, the 234-residue chain is CKLF-like MARVEL transmembrane domain-containing protein 4 (234 aa).

The segment covering 1-11 (MRSGEELDGFE) has biased composition (acidic residues). The tract at residues 1–38 (MRSGEELDGFEGEASSTSMISGASSPYQPTTEPVSQRR) is disordered. Positions 15 to 25 (SSTSMISGASS) are enriched in low complexity. Residues 49 to 176 (YLRGALGRLK…NTFLAVQKWR (128 aa)) form the MARVEL domain. Helical transmembrane passes span 59-79 (VAQVILALIAFICIETIMACS), 85-105 (YFFEFVSCSAFVVTGVLLIMF), 123-143 (LVNTGLSAFLFFIASIVLAAL), and 151-171 (IAAVIFGFLATAAYAVNTFLA). Ser194 carries the phosphoserine modification.

It belongs to the chemokine-like factor family. In terms of assembly, interacts with PD-L1/CD274 and CMTM6. In terms of tissue distribution, highly expressed in testis and prostate.

Its subcellular location is the membrane. In terms of biological role, acts as a backup for CMTM6 to regulate plasma membrane expression of PD-L1/CD274, an immune inhibitory ligand critical for immune tolerance to self and antitumor immunity. May protect PD-L1/CD274 from being polyubiquitinated and targeted for degradation. This Homo sapiens (Human) protein is CKLF-like MARVEL transmembrane domain-containing protein 4.